The chain runs to 556 residues: Probable glucomannan 4-beta-mannosyltransferase 3 (556 aa).

A helical transmembrane segment spans residues 56–76 (IFVFIPILKCLVTICLVMSLL). The active site involves aspartate 159. Residues aspartate 218 and aspartate 220 each coordinate substrate. Aspartate 312 is an active-site residue. 4 helical membrane-spanning segments follow: residues 391 to 411 (IVVH…TVLF), 428 to 448 (ITIL…FWIL), 509 to 529 (LVVG…GGSY), and 530 to 550 (FYVY…GYIG).

The protein belongs to the glycosyltransferase 2 family. Plant cellulose synthase-like A subfamily.

It is found in the golgi apparatus membrane. It catalyses the reaction GDP-mannose + (glucomannan)n = GDP + (glucomannan)n+1.. Its function is as follows. Probable mannan synthase which consists of a 4-beta-mannosyltransferase activity on mannan using GDP-mannose. The beta-1,4-mannan product is the backbone for galactomannan synthesis by galactomannan galactosyltransferase. Galactomannan is a noncellulosic polysaccharides of plant cell wall. This chain is Probable glucomannan 4-beta-mannosyltransferase 3, found in Arabidopsis thaliana (Mouse-ear cress).